A 418-amino-acid polypeptide reads, in one-letter code: Putative ion-transport protein YfeO (418 aa).

12 helical membrane-spanning segments follow: residues 10 to 30 (LLLSLPAVAIGIASSLILIVV), 54 to 74 (DSPLWIIGVLTLTGIAVGLVI), 99 to 119 (ALPGLIVALILGLAGGVSLGP), 120 to 140 (EHPIMTINIALAVAIGARLLP), 149 to 169 (ILASAGTIGALFGTPVAAALI), 186 to 206 (LFAPLMAAAAGALTTGLFFHP), 223 to 243 (ILSGAIVAAIAIAAGMVAVWC), 258 to 278 (VLVLGIGGFILGILGVIGGPV), 300 to 320 (DYFLLAVIKLAALVVAAASGF), 322 to 342 (GGRIFPAVFVGVALGLMLHEH), 343 to 363 (VPAVPAAITVSCAILGIVLVV), and 371 to 391 (LFMAAVVVPNTTLLPLLCIVM).

This sequence belongs to the chloride channel (TC 2.A.49) family.

Its subcellular location is the cell membrane. This chain is Putative ion-transport protein YfeO, found in Shigella boydii serotype 4 (strain Sb227).